We begin with the raw amino-acid sequence, 364 residues long: Guanine nucleotide-binding protein alpha-8 subunit (364 aa).

Gly2 carries N-myristoyl glycine lipidation. Cys5 carries S-palmitoyl cysteine lipidation. Residues 38-364 (KILKLLILGP…QHTMQKVGIQ (327 aa)) enclose the G-alpha domain. The tract at residues 41–54 (KLLILGPGESGKST) is G1 motif. Residues 46–53 (GPGESGKS), 186–192 (LKSRVPT), 211–215 (DVGGQ), 280–283 (NKID), and Ala336 contribute to the GTP site. Ser53 and Thr192 together coordinate Mg(2+). Residues 184-192 (DILKSRVPT) form a G2 motif region. The G3 motif stretch occupies residues 207 to 216 (FKIFDVGGQR). The segment at 276-283 (ILFLNKID) is G4 motif. The G5 motif stretch occupies residues 334-339 (TCATDT).

It belongs to the G-alpha family. As to quaternary structure, g proteins are composed of 3 units; alpha, beta and gamma. The alpha chain contains the guanine nucleotide binding site.

Guanine nucleotide-binding proteins (G proteins) are involved as modulators or transducers in various transmembrane signaling systems. The chain is Guanine nucleotide-binding protein alpha-8 subunit (gpa-8) from Caenorhabditis briggsae.